The primary structure comprises 564 residues: Putative ABC transporter ATP-binding protein PBPRA2240 (564 aa).

ABC transporter domains are found at residues 3 to 244 and 299 to 533; these read IEFS…GIRE and LTVN…ANLT. Residues 37 to 44 and 332 to 339 contribute to the ATP site; these read GPSGSGKS and GKNGSGKS.

This sequence belongs to the ABC transporter superfamily.

It is found in the cell inner membrane. Probably part of an ABC transporter complex. Responsible for energy coupling to the transport system. The chain is Putative ABC transporter ATP-binding protein PBPRA2240 from Photobacterium profundum (strain SS9).